Here is a 438-residue protein sequence, read N- to C-terminus: DNA polymerase IV 1 (438 aa).

The region spanning 46–226 is the UmuC domain; sequence LAHIDCDAFY…KPVTMIWGVG (181 aa). 2 residues coordinate Mg(2+): Asp-50 and Asp-143. Glu-144 is an active-site residue.

Belongs to the DNA polymerase type-Y family. As to quaternary structure, monomer. The cofactor is Mg(2+).

It localises to the cytoplasm. The enzyme catalyses DNA(n) + a 2'-deoxyribonucleoside 5'-triphosphate = DNA(n+1) + diphosphate. Functionally, poorly processive, error-prone DNA polymerase involved in untargeted mutagenesis. Copies undamaged DNA at stalled replication forks, which arise in vivo from mismatched or misaligned primer ends. These misaligned primers can be extended by PolIV. Exhibits no 3'-5' exonuclease (proofreading) activity. May be involved in translesional synthesis, in conjunction with the beta clamp from PolIII. This is DNA polymerase IV 1 (dinB1) from Mesorhizobium japonicum (strain LMG 29417 / CECT 9101 / MAFF 303099) (Mesorhizobium loti (strain MAFF 303099)).